We begin with the raw amino-acid sequence, 145 residues long: uncharacterized protein (145 aa).

This is an uncharacterized protein from Deinococcus radiodurans (strain ATCC 13939 / DSM 20539 / JCM 16871 / CCUG 27074 / LMG 4051 / NBRC 15346 / NCIMB 9279 / VKM B-1422 / R1).